Consider the following 356-residue polypeptide: Putative zinc finger protein At1g68190 (356 aa).

Zn(2+) contacts are provided by C14, C17, C37, H42, C57, C60, C80, and H85. Residues 14–56 form a B box-type 1; atypical zinc finger; the sequence is CEFCKAYRAVVYCIADTANLCLTCDAKVHSANSLSGRHLRTVL. A B box-type 2; atypical zinc finger spans residues 57 to 97; the sequence is CDSCKNQPCVVRCFDHKMFLCHGCNDKFHGGGSSEHRRRDL. The disordered stretch occupies residues 159 to 178; the sequence is ENGSSSLTERGDPSPLELPK.

This sequence belongs to the CONSTANS family.

The protein resides in the nucleus. The polypeptide is Putative zinc finger protein At1g68190 (Arabidopsis thaliana (Mouse-ear cress)).